The sequence spans 540 residues: O-phosphoserine--tRNA(Cys) ligase (540 aa).

Substrate is bound by residues 188 to 190 (HMT), 233 to 235 (SAS), 275 to 276 (YY), and asparagine 319.

The protein belongs to the class-II aminoacyl-tRNA synthetase family. O-phosphoseryl-tRNA(Cys) synthetase subfamily. In terms of assembly, homotetramer. Interacts with SepCysS.

It carries out the reaction tRNA(Cys) + O-phospho-L-serine + ATP = O-phospho-L-seryl-tRNA(Cys) + AMP + diphosphate. Its function is as follows. Catalyzes the attachment of O-phosphoserine (Sep) to tRNA(Cys). The sequence is that of O-phosphoserine--tRNA(Cys) ligase from Methanococcus aeolicus (strain ATCC BAA-1280 / DSM 17508 / OCM 812 / Nankai-3).